A 111-amino-acid polypeptide reads, in one-letter code: uncharacterized protein (111 aa).

Residues Arg3 to Leu29 are a coiled coil. Positions Thr6–Tyr111 constitute a PPM-type phosphatase domain.

This is an uncharacterized protein from Acanthamoeba polyphaga mimivirus (APMV).